We begin with the raw amino-acid sequence, 69 residues long: Consomatin Be1 (69 aa).

The first 22 residues, 1 to 22 (MEMAYWVMVMMMVWITAPLSEG), serve as a signal peptide directing secretion. Residues 23–57 (GKLNDVIRALAPDDVTPQFILRSLISRRRSDSDVR) constitute a propeptide that is removed on maturation. Glu58 carries the 4-carboxyglutamate modification. Cysteines 62 and 67 form a disulfide. At Trp64 the chain carries D-tryptophan. A 4-hydroxyproline mark is found at Pro68 and Pro69.

The protein belongs to the conotoxin C superfamily. Consomatin family. In terms of tissue distribution, expressed by the venom duct.

It localises to the secreted. Moderately activates human somatostatin receptors (SSTR) with a preferential activation of SSTR1 and SSTR4. In vivo, does not cause behavioral changes in mice within a few minutes of intracranial injection, but causes a progressive loss of movement thereafter. Four to five hours after injection, mice recover, even with the highest dose tested. Shows antinociception and antihyperalgesia activities in two mouse models of acute pain, most probably by acting outside the central nervous system. This is Consomatin Be1 from Conus betulinus (Beech cone).